Consider the following 247-residue polypeptide: Reticulon-like protein B8 (247 aa).

A Reticulon domain is found at 61–247 (SADVLLWRNK…SGKFGLKKRE (187 aa)). The next 3 helical transmembrane spans lie at 71-91 (KISA…EWIN), 92-112 (FHFL…QFVW), and 166-186 (FLMA…CNFL).

It is found in the endoplasmic reticulum membrane. The chain is Reticulon-like protein B8 (RTNLB8) from Arabidopsis thaliana (Mouse-ear cress).